We begin with the raw amino-acid sequence, 439 residues long: Homogentisate 1,2-dioxygenase (439 aa).

The active-site Proton acceptor is the histidine 293. The Fe cation site is built by histidine 336 and glutamate 342. Tyrosine 351 and histidine 372 together coordinate homogentisate. Histidine 372 provides a ligand contact to Fe cation.

Belongs to the homogentisate dioxygenase family. As to quaternary structure, hexamer; dimer of trimers. The cofactor is Fe cation.

It carries out the reaction homogentisate + O2 = 4-maleylacetoacetate + H(+). It participates in amino-acid degradation; L-phenylalanine degradation; acetoacetate and fumarate from L-phenylalanine: step 4/6. Its function is as follows. Involved in the catabolism of homogentisate (2,5-dihydroxyphenylacetate or 2,5-OH-PhAc), a central intermediate in the degradation of phenylalanine and tyrosine. Catalyzes the oxidative ring cleavage of the aromatic ring of homogentisate to yield maleylacetoacetate. The chain is Homogentisate 1,2-dioxygenase from Cupriavidus necator (strain ATCC 17699 / DSM 428 / KCTC 22496 / NCIMB 10442 / H16 / Stanier 337) (Ralstonia eutropha).